We begin with the raw amino-acid sequence, 293 residues long: MEEVETAEEQLAKQHRKEKKDLQAKIQSMKNAVPKNDKKRRKQLTEDIAKLEAELSQKHENELKLQNTSSVEEVSDALDSMSVANHEEQSDPSKQSRTSKAQKRRDKKAALEKEREMRIAEAEVENLSGSRHQEGLKLREKLVERHLQIKEISSDGHCMYRAVEHQLTERGLALGLKELRDQTAQYMRSHADDFMPFLTNPNTGDMYTAEEFEKYCSDVADTAAWGGQLELKALSQVLQLPIEVIQADSPCITIGEEYDKPKITLIYMRHAYGLGEHYNSVEPLKDLANEEEG.

Disordered stretches follow at residues 1-43 and 57-114; these read MEEV…RRKQ and QKHE…LEKE. The 138-residue stretch at 147–284 folds into the OTU domain; sequence LQIKEISSDG…GEHYNSVEPL (138 aa). The cys-loop stretch occupies residues 152 to 158; it reads ISSDGHC. D155 is an active-site residue. Catalysis depends on C158, which acts as the Nucleophile. Residues 219-229 are variable-loop; that stretch reads VADTAAWGGQL. The segment at 267–277 is his-loop; that stretch reads YMRHAYGLGEH. H277 is an active-site residue.

The enzyme catalyses Thiol-dependent hydrolysis of ester, thioester, amide, peptide and isopeptide bonds formed by the C-terminal Gly of ubiquitin (a 76-residue protein attached to proteins as an intracellular targeting signal).. In terms of biological role, deubiquitinating enzyme that may play a role in the ubiquitin-dependent regulation of different cellular processes. This is Deubiquitinase OTUD6B (otud6b) from Danio rerio (Zebrafish).